Reading from the N-terminus, the 693-residue chain is Sister chromatid cohesion 1 protein 3 (693 aa).

4 disordered regions span residues 167 to 250 (IPMD…PGTV), 262 to 361 (DLSP…KNFD), 460 to 511 (PVSP…TFDN), and 545 to 573 (TQSG…GQRN). Composition is skewed to basic and acidic residues over residues 178–201 (VSRH…EPRD) and 232–243 (TEERIPNSERND). The segment covering 264–277 (SPTSHPSFAAQQQD) has biased composition (polar residues). The segment covering 278-295 (VRVERTESLDETLNEKEP) has biased composition (basic and acidic residues). Low complexity predominate over residues 316–325 (RSGSPGSAAG). Composition is skewed to polar residues over residues 465–483 (PDST…QQTE) and 545–564 (TQSG…TSTV).

This sequence belongs to the rad21 family. Component of the cohesin complex. As to expression, low expression in shoots, buds, siliques, leaves and roots. Found in, but not limited to, actively dividing cells: in procambium, protoderm and ground meristem in roots, and in shoot and floral meristems.

The protein resides in the nucleus. Its function is as follows. May be involved in sister chromatid cohesion during mitosis. This chain is Sister chromatid cohesion 1 protein 3 (SYN3), found in Arabidopsis thaliana (Mouse-ear cress).